The sequence spans 2760 residues: A-kinase anchor protein 13 (2760 aa).

Disordered regions lie at residues 356–388, 442–517, 530–577, 604–711, 729–857, 890–940, 954–1029, and 1132–1162; these read CSHKKNKDTGRPGEGVEPASAVDSRSASHQDSC, PDAR…EPKQ, AAGA…VLPA, SSLD…AAHN, EKDL…EQEG, GGSI…QEIS, EKAL…ASEA, and EGTDLSCPTSKSKETPNNEETTQPPARDLPT. Polar residues predominate over residues 378–388; it reads DSRSASHQDSC. A compositionally biased stretch (basic and acidic residues) spans 442-454; the sequence is PDARQHSSGRELP. The important for interaction with PRKAR2A stretch occupies residues 482–504; the sequence is QNSKPQVGESAKERLENSDISSA. Residues 530-547 are compositionally biased toward low complexity; that stretch reads AAGADAPAEASPAWSPEE. 3 stretches are compositionally biased toward polar residues: residues 620-638, 654-664, and 701-711; these read KQNSESSAQHAQSLNSQAP, CPQSTETSSGG, and DTVTSDTAAHN. Positions 769 to 780 are enriched in low complexity; that stretch reads SSFSLASSPESE. Serine 776 bears the Phosphoserine mark. Threonine 801 carries the post-translational modification Phosphothreonine. Over residues 814-826 the composition is skewed to basic and acidic residues; the sequence is PDGRDLNDTDKVG. The segment covering 839–849 has biased composition (polar residues); sequence ELQTSMGNTSP. A compositionally biased stretch (basic and acidic residues) spans 906-931; sequence GKDKATKCPSVKEDVHSSEMSREDQR. At threonine 932 the chain carries Phosphothreonine. Polar residues-rich tracts occupy residues 958 to 972 and 1001 to 1020; these read QHSNSPDTPSACLQT and TSLSADSEQKTSSTEQSGSS. Phosphoserine is present on serine 962. The important for interaction with PRKAR2A stretch occupies residues 1213–1228; that stretch reads SIEETATRIVEAVIKQ. Disordered regions lie at residues 1392 to 1411, 1425 to 1508, and 1520 to 1539; these read GVLQRESGSDSDLFHSPSDE, LLCD…VPAN, and SPFRRHSWGPGKNAASDAEM. A compositionally biased stretch (low complexity) spans 1428 to 1439; the sequence is DTTGSSSSTDDT. The span at 1449–1472 shows a compositional bias: polar residues; it reads GSDVSLPQTSKLNRSRNHQSSNGF. A phosphoserine mark is found at serine 1450, serine 1468, serine 1501, serine 1526, and serine 1585. The segment at 1546-1695 is important for interaction with MAP2K3; it reads QVLGHVVRRP…SRPFHSASAN (150 aa). Residues 1592 to 1628 are disordered; that stretch reads GGGVGNKPSSSLEISSANSSELRNPFSGEEQRSSLMS. Residues 1600-1611 are compositionally biased toward low complexity; that stretch reads SSSLEISSANSS. Phosphoserine occurs at positions 1625, 1628, and 1630. Lysine 1654 carries the N6-methyllysine modification. The segment at 1733-1755 is disordered; it reads RNKMSSSKKSKKEKDKKTLNGHT. The Phorbol-ester/DAG-type zinc finger occupies 1753–1800; the sequence is GHTFSPIPIVGPINCSQCMKPFTNKDAYTCASCGAFVHKGCRENLASC. A phosphoserine mark is found at serine 1838, serine 1857, and serine 1891. Residues 1881-2760 form an interaction with ESR1 region; that stretch reads MSNTWKFLSH…VPAEGEEIFC (880 aa). Phosphothreonine is present on threonine 1892. Phosphoserine occurs at positions 1894 and 1907. In terms of domain architecture, DH spans 1956-2153; it reads KRQEVIYELM…KDVIGAVDSK (198 aa). Positions 2176-2280 constitute a PH domain; the sequence is MRMKSGQMFA…WIQIIQDTIN (105 aa). Phosphoserine is present on residues serine 2292 and serine 2345. Residues 2292–2329 adopt a coiled-coil conformation; that stretch reads SENEEEKRLLDTKARELKEQLQQKDQQILLLLEEKEMI. Threonine 2415 carries the phosphothreonine modification. The interval 2422–2450 is disordered; it reads HQLNASKGGEKEEGDDGQDLRRTESDSGL. Residues 2439 to 2450 are compositionally biased toward basic and acidic residues; the sequence is QDLRRTESDSGL. Residues serine 2511 and serine 2514 each carry the phosphoserine modification. The stretch at 2516–2632 forms a coiled coil; the sequence is LIEQEKQRSL…LSQRQMEQDL (117 aa). Disordered stretches follow at residues 2568 to 2588 and 2660 to 2760; these read AEREETVRRRQQDLERDREEL and TPSI…EIFC. Polar residues-rich tracts occupy residues 2660–2684 and 2696–2711; these read TPSITKSGSLDSELSVSPKRNSISR and SSASQTKVPEGQSQAP. The residue at position 2676 (serine 2676) is a Phosphoserine. The segment covering 2743 to 2752 has biased composition (low complexity); it reads PGDGPAPEVP.

Interacts with the cAMP-dependent protein kinase (PKA) holoenzyme and with the regulatory subunit PRKAR2A. Interacts with RHOA. Also interacts with RHOB and RHOC. Identified in a ternary complex with RHOA and PRKAR2A. Identified in a complex with NR3C1 and RHOA. Interacts with BRAF and KSR1. Identified in a complex with BRAF and KSR1. Component of a signaling complex containing at least AKAP13, PKN1, MAPK14, ZAK and MAP2K3. Within this complex, AKAP13 interacts directly with PKN1, which in turn recruits MAPK14, MAP2K3 and ZAK. Interacts (phosphorylated form) with YWHAB and YWHAZ. Interaction with YWHAB inhibits activation of RHOA, interferes with PKN1 binding and activation of MAP kinases. Interacts with GNA12. Interacts with IKBKB. Interacts with ESR1, THRA, PPARA and NME2. Interacts (via the C-terminal domain after the PH domain) with MEF2C and RXRB. Interacts (via the C-terminal domain after the PH domain) with PRKD1. Detected in bone osteoblasts (at protein level).

It is found in the cytoplasm. The protein resides in the cytosol. The protein localises to the cell cortex. It localises to the nucleus. Its subcellular location is the membrane. Its function is as follows. Scaffold protein that plays an important role in assembling signaling complexes downstream of several types of G protein-coupled receptors. Activates RHOA in response to signaling via G protein-coupled receptors via its function as Rho guanine nucleotide exchange factor. May also activate other Rho family members. Part of a kinase signaling complex that links ADRA1A and ADRA1B adrenergic receptor signaling to the activation of downstream p38 MAP kinases, such as MAPK11 and MAPK14. Part of a signaling complex that links ADRA1B signaling to the activation of RHOA and IKBKB/IKKB, leading to increased NF-kappa-B transcriptional activity. Part of a RHOA-dependent signaling cascade that mediates responses to lysophosphatidic acid (LPA), a signaling molecule that activates G-protein coupled receptors and potentiates transcriptional activation of the glucocorticoid receptor NR3C1. Part of a signaling cascade that stimulates MEF2C-dependent gene expression in response to lysophosphatidic acid (LPA). Part of a signaling pathway that activates MAPK11 and/or MAPK14 and leads to increased transcription activation of the estrogen receptors ESR1 and ESR2. Part of a signaling cascade that links cAMP and EGFR signaling to BRAF signaling and to PKA-mediated phosphorylation of KSR1, leading to the activation of downstream MAP kinases, such as MAPK1 or MAPK3. Functions as a scaffold protein that anchors cAMP-dependent protein kinase (PKA) and PRKD1. This promotes activation of PRKD1, leading to increased phosphorylation of HDAC5 and ultimately cardiomyocyte hypertrophy. Has no guanine nucleotide exchange activity on CDC42, Ras or Rac. Required for normal embryonic heart development, and in particular for normal sarcomere formation in the developing cardiomyocytes. Plays a role in cardiomyocyte growth and cardiac hypertrophy in response to activation of the beta-adrenergic receptor by phenylephrine or isoproterenol. Required for normal adaptive cardiac hypertrophy in response to pressure overload. Plays a role in osteogenesis. This is A-kinase anchor protein 13 from Rattus norvegicus (Rat).